Reading from the N-terminus, the 452-residue chain is Transcription factor ETV6 (452 aa).

Lys-11 is subject to N6-acetyllysine; alternate. Lys-11 is covalently cross-linked (Glycyl lysine isopeptide (Lys-Gly) (interchain with G-Cter in SUMO2); alternate). Thr-18 bears the Phosphothreonine mark. Ser-22 is modified (phosphoserine). The 85-residue stretch at 40–124 folds into the PNT domain; the sequence is ALRMEEDSIR…ELLQHILKQR (85 aa). Positions 154–262 are disordered; that stretch reads EDNGVQRTSR…PRPSSPRQEG (109 aa). Over residues 158-174 the composition is skewed to polar residues; the sequence is VQRTSRPSAENVHQNPP. Phosphoserine is present on residues Ser-213, Ser-238, and Ser-257. Residue Lys-288 forms a Glycyl lysine isopeptide (Lys-Gly) (interchain with G-Cter in SUMO2) linkage. An N6-acetyllysine; alternate modification is found at Lys-302. Lys-302 is covalently cross-linked (Glycyl lysine isopeptide (Lys-Gly) (interchain with G-Cter in SUMO2); alternate). At Ser-323 the chain carries Phosphoserine. A DNA-binding region (ETS) is located at residues 339-420; sequence RLLWDYVYQL…PGQRLLFRFM (82 aa). Residues Lys-403 and Lys-421 each participate in a glycyl lysine isopeptide (Lys-Gly) (interchain with G-Cter in SUMO2) cross-link.

The protein belongs to the ETS family. Can form homodimers or heterodimers with TEL2 or FLI1. Interacts with L3MBTL1 and HDAC9.

The protein localises to the nucleus. Functionally, transcriptional repressor; binds to the DNA sequence 5'-CCGGAAGT-3'. Plays a role in hematopoiesis and malignant transformation. The protein is Transcription factor ETV6 (ETV6) of Bos taurus (Bovine).